The primary structure comprises 96 residues: MIEIRETSSGVSFAVRLQPKAKKTAIIGELNGALKLGVTDPPIDGRANEALIRFVAGLLKVTRSSVTIAAGESSRNKVIRIEGVTAEQVRFRLKVW.

The protein belongs to the UPF0235 family.

The polypeptide is UPF0235 protein Acid345_4205 (Koribacter versatilis (strain Ellin345)).